A 593-amino-acid polypeptide reads, in one-letter code: High affinity cGMP-specific 3',5'-cyclic phosphodiesterase 9A (593 aa).

The interval 87 to 141 (SAGVEDKRTTSRGQSAERPLRDRRVVGLEQPRREGAFESGQVEPRPREPQGCYQE) is disordered. The span at 104-122 (RPLRDRRVVGLEQPRREGA) shows a compositional bias: basic and acidic residues. Residues 236-557 (PRRDVPTYPK…DRYEELKRID (322 aa)) form the PDEase domain. The Proton donor role is filled by H312. 312 to 316 (HNFRH) contacts 3',5'-cyclic GMP. Zn(2+) contacts are provided by H316, H352, and D353. D353 provides a ligand contact to 3',5'-cyclic GMP. D353 contributes to the Mg(2+) binding site. S379 is modified (phosphoserine). 3',5'-cyclic GMP-binding positions include D462, Y484, and 512–513 (AQ). Residue D462 participates in Zn(2+) binding. Positions 564–593 (QKKTDSLTSGATEKSRERSRDVKNSEGDCA) are disordered. The span at 576-593 (EKSRERSRDVKNSEGDCA) shows a compositional bias: basic and acidic residues.

Belongs to the cyclic nucleotide phosphodiesterase family. PDE9 subfamily. Homodimer. Zn(2+) is required as a cofactor. Mg(2+) serves as cofactor. As to expression, expressed in all tissues examined (testis, brain, small intestine, skeletal muscle, heart, lung, thymus, spleen, placenta, kidney, liver, pancreas, ovary and prostate) except blood. Highest levels in brain, heart, kidney, spleen, prostate and colon. Isoform PDE9A12 is found in prostate. In brain, present in the cortex, cerebellum, and subiculum (at protein level). In heart, primarily localizes to myocytes.

The protein resides in the cell projection. The protein localises to the ruffle membrane. It localises to the cytoplasm. Its subcellular location is the perinuclear region. It is found in the golgi apparatus. The protein resides in the endoplasmic reticulum. The protein localises to the cell membrane. It localises to the sarcolemma. The catalysed reaction is 3',5'-cyclic GMP + H2O = GMP + H(+). It functions in the pathway purine metabolism; 3',5'-cyclic GMP degradation; GMP from 3',5'-cyclic GMP: step 1/1. With respect to regulation, inhibited by zaprinast; inhibitor is however not specific to PDE9A. Specifically inhibited by BAY-73-6691 (1-(2-chlorophenyl)-6-((2R)-3,3,3- trifluoro-2-methylpropyl)-1,5-dihydro-4H-pyrazolo(3,4-d)pyrimidine-4-one). BAY-73-9961 has two enantiomers, (R) and (S), due to the presence of a chiral center, and both forms vary in their pattern of interaction. Specifically inhibited by PF-4181366 (4H-Pyrazolo[3,4-d]pyrimidin-4-one, 1- cyclopentyl-1,5-dihydro-6-[(3S,4S)-4-methyl- 1-(6-quinoxalinylmethyl)-3-pyrrolidinyl]-one). Specifically inhibited by PF-4449613 ((R)-6-(1-(3-phenoxyazetidin-1-yl)ethyl)-1-(tetrahydro-2H-pyran-4-yl)-1H-pyrazolo[3,4-d]pyrimidin- 4(5H)-one). Specifically inhibited by inhibitor 28 (2-((1-(2-Chlorophenyl)-4-hydroxy-1Hpyrazolo[ 3,4-d]pyrimidin-6-yl)amino)-N-(4- methoxyphenyl)propanamide): inhibitor forms a hydrogen bond with Tyr-484 and Gln-513. Specifically inhibited by 1-Cyclopentyl-6-[(1r)-1-(3-phenoxyazetidin- 1-Yl)ethyl]-1,5-dihydro-4h-pyrazolo[3,4-D] pyrimidin-4-one: inhibitor forms a hydrogen bond with Tyr-484 and Gln-513. Specifically hydrolyzes the second messenger cGMP, which is a key regulator of many important physiological processes. Highly specific: compared to other members of the cyclic nucleotide phosphodiesterase family, has the highest affinity and selectivity for cGMP. Specifically regulates natriuretic-peptide-dependent cGMP signaling in heart, acting as a regulator of cardiac hypertrophy in myocytes and muscle. Does not regulate nitric oxide-dependent cGMP in heart. Additional experiments are required to confirm whether its ability to hydrolyze natriuretic-peptide-dependent cGMP is specific to heart or is a general feature of the protein. In brain, involved in cognitive function, such as learning and long-term memory. In Homo sapiens (Human), this protein is High affinity cGMP-specific 3',5'-cyclic phosphodiesterase 9A.